Consider the following 514-residue polypeptide: Glutathione-binding protein GsiB (514 aa).

Positions 1-27 (MSVMTIQRRWLVAAGVTAAMVASPVWA) are cleaved as a signal peptide.

This sequence belongs to the bacterial solute-binding protein 5 family. In terms of assembly, the complex is composed of two ATP-binding proteins (GsiA), two transmembrane proteins (GsiC and GsiD) and a solute-binding protein (GsiB).

It is found in the periplasm. Its function is as follows. Part of the ABC transporter complex GsiABCD involved in glutathione import. Binds glutathione. The sequence is that of Glutathione-binding protein GsiB from Pectobacterium atrosepticum (strain SCRI 1043 / ATCC BAA-672) (Erwinia carotovora subsp. atroseptica).